We begin with the raw amino-acid sequence, 132 residues long: Ribosome-binding factor A (132 aa).

This sequence belongs to the RbfA family. As to quaternary structure, monomer. Binds 30S ribosomal subunits, but not 50S ribosomal subunits or 70S ribosomes.

The protein localises to the cytoplasm. Functionally, one of several proteins that assist in the late maturation steps of the functional core of the 30S ribosomal subunit. Associates with free 30S ribosomal subunits (but not with 30S subunits that are part of 70S ribosomes or polysomes). Required for efficient processing of 16S rRNA. May interact with the 5'-terminal helix region of 16S rRNA. The chain is Ribosome-binding factor A from Edwardsiella ictaluri (strain 93-146).